Here is a 573-residue protein sequence, read N- to C-terminus: Isocitrate dehydrogenase kinase/phosphatase (573 aa).

ATP-binding positions include 315–321 and Lys336; that span reads APGIRGM. The active site involves Asp371.

This sequence belongs to the AceK family.

The protein resides in the cytoplasm. The catalysed reaction is L-seryl-[isocitrate dehydrogenase] + ATP = O-phospho-L-seryl-[isocitrate dehydrogenase] + ADP + H(+). Bifunctional enzyme which can phosphorylate or dephosphorylate isocitrate dehydrogenase (IDH) on a specific serine residue. This is a regulatory mechanism which enables bacteria to bypass the Krebs cycle via the glyoxylate shunt in response to the source of carbon. When bacteria are grown on glucose, IDH is fully active and unphosphorylated, but when grown on acetate or ethanol, the activity of IDH declines drastically concomitant with its phosphorylation. This chain is Isocitrate dehydrogenase kinase/phosphatase, found in Enterobacter sp. (strain 638).